The primary structure comprises 310 residues: Ceramide synthase LOH1 (310 aa).

6 helical membrane passes run 16–36, 85–105, 131–151, 157–177, 216–236, and 260–280; these read SFPT…FPTI, CIYY…EPWF, FLYM…VFWE, FGVS…SYIC, FVLF…FWIL, and YMFN…WVLI. The TLC domain occupies 76 to 289; the sequence is RKFKESAWKC…IYRMLVKQVQ (214 aa). Phosphoserine occurs at positions 300 and 302.

Expressed ubiquitously at high levels. Not observed in pollen.

Its subcellular location is the endoplasmic reticulum membrane. The enzyme catalyses (4R)-hydroxysphinganine + a fatty acyl-CoA = an N-acyl-(4R)-4-hydroxysphinganine + CoA + H(+). It catalyses the reaction hexacosanoyl-CoA + (4R)-hydroxysphinganine = N-hexacosanoyl-(4R)-hydroxysphinganine + CoA + H(+). The catalysed reaction is tetracosanoyl-CoA + (4R)-hydroxysphinganine = N-tetracosanoyl-(4R)-hydroxysphinganine + CoA + H(+). The protein operates within sphingolipid metabolism. Inhibited by the mycotoxin fumonisin B(1), a sphingosine analog mycotoxins produced by pathogenic fungi. Repressed by divalent cation such as magnesium Mg(2+), copper Cu(2+), zinc Zn(2+), manganese Mn(2+), calcium Ca(2+) and cobalt Co(2+). Essential for plant growth, promotes cell division in root meristems. Catalyzes the biosynthesis of ceramide sphingolipids with C(16) to C(28) fatty acids, structural membrane lipids involved in membrane trafficking (e.g. early endosomes) and cell polarity (e.g. polar auxin transport related proteins); mostly active with t18:0 and saturated very long saturated fatty acids (C24:0 and C26:0), such as long-chain base (LCB) phytosphingosine (t18:0), lignoceroyl- and hexacosanoyl-CoAs. Mediates resistance to sphinganine-analog mycotoxins (SAMs, e.g. fumonisin B(1)) by restoring the sphingolipid biosynthesis. Could salvage the transport of GPI-anchored proteins from the endoplasmic reticulum to the Golgi apparatus in ceramides-depleted cells after SAM exposure. May prevent precocious cell death by delaying PR1 accumulation during aging. Contributes to hypoxic conditions tolerance (e.g. submergences), especially in the dark, by promoting the formation of very-long-chain (VLC) ceramide species (22:1, 24:1 and 26:1) and of VLC unsaturated ceramides, which are modulating CTR1-mediated ethylene signaling leading to endoplasmic reticulum (ER)-to-nucleus translocation of EIN2 and EIN3. The sequence is that of Ceramide synthase LOH1 from Arabidopsis thaliana (Mouse-ear cress).